The primary structure comprises 252 residues: Chitooligosaccharide deacetylase (252 aa).

Residues His-61 and His-125 each contribute to the Mg(2+) site.

The protein belongs to the YdjC deacetylase family. ChbG subfamily. As to quaternary structure, homodimer. The cofactor is Mg(2+).

It localises to the cytoplasm. It catalyses the reaction N,N'-diacetylchitobiose + H2O = N-acetyl-beta-D-glucosaminyl-(1-&gt;4)-D-glucosamine + acetate. The catalysed reaction is diacetylchitobiose-6'-phosphate + H2O = N'-monoacetylchitobiose-6'-phosphate + acetate. It participates in glycan degradation; chitin degradation. In terms of biological role, involved in the degradation of chitin. ChbG is essential for growth on the acetylated chitooligosaccharides chitobiose and chitotriose but is dispensable for growth on cellobiose and chitosan dimer, the deacetylated form of chitobiose. Deacetylation of chitobiose-6-P and chitotriose-6-P is necessary for both the activation of the chb promoter by the regulatory protein ChbR and the hydrolysis of phosphorylated beta-glucosides by the phospho-beta-glucosidase ChbF. Catalyzes the removal of only one acetyl group from chitobiose-6-P to yield monoacetylchitobiose-6-P, the inducer of ChbR and the substrate of ChbF. This Citrobacter koseri (strain ATCC BAA-895 / CDC 4225-83 / SGSC4696) protein is Chitooligosaccharide deacetylase.